We begin with the raw amino-acid sequence, 139 residues long: Sec-independent protein translocase protein TatB (139 aa).

A helical membrane pass occupies residues M1 to G21. Positions L69–P139 are disordered. Residues M80 to P95 are compositionally biased toward pro residues.

It belongs to the TatB family. The Tat system comprises two distinct complexes: a TatABC complex, containing multiple copies of TatA, TatB and TatC subunits, and a separate TatA complex, containing only TatA subunits. Substrates initially bind to the TatABC complex, which probably triggers association of the separate TatA complex to form the active translocon.

It localises to the cell inner membrane. Part of the twin-arginine translocation (Tat) system that transports large folded proteins containing a characteristic twin-arginine motif in their signal peptide across membranes. Together with TatC, TatB is part of a receptor directly interacting with Tat signal peptides. TatB may form an oligomeric binding site that transiently accommodates folded Tat precursor proteins before their translocation. This Stutzerimonas stutzeri (strain A1501) (Pseudomonas stutzeri) protein is Sec-independent protein translocase protein TatB.